A 173-amino-acid chain; its full sequence is Small ribosomal subunit protein uS5 (173 aa).

The S5 DRBM domain maps to 17-80; the sequence is WQERVIQIRR…ADGKKQLIEV (64 aa).

Belongs to the universal ribosomal protein uS5 family. In terms of assembly, part of the 30S ribosomal subunit. Contacts proteins S4 and S8.

With S4 and S12 plays an important role in translational accuracy. In terms of biological role, located at the back of the 30S subunit body where it stabilizes the conformation of the head with respect to the body. The protein is Small ribosomal subunit protein uS5 of Microcystis aeruginosa (strain NIES-843 / IAM M-2473).